The sequence spans 425 residues: Serine hydroxymethyltransferase (425 aa).

132 to 134 contributes to the (6S)-5,6,7,8-tetrahydrofolate binding site; it reads GHL. K237 carries the N6-(pyridoxal phosphate)lysine modification.

This sequence belongs to the SHMT family. As to quaternary structure, homodimer. The cofactor is pyridoxal 5'-phosphate.

Its subcellular location is the cytoplasm. It carries out the reaction (6R)-5,10-methylene-5,6,7,8-tetrahydrofolate + glycine + H2O = (6S)-5,6,7,8-tetrahydrofolate + L-serine. The protein operates within one-carbon metabolism; tetrahydrofolate interconversion. Its pathway is amino-acid biosynthesis; glycine biosynthesis; glycine from L-serine: step 1/1. Catalyzes the reversible interconversion of serine and glycine with tetrahydrofolate (THF) serving as the one-carbon carrier. This reaction serves as the major source of one-carbon groups required for the biosynthesis of purines, thymidylate, methionine, and other important biomolecules. Also exhibits THF-independent aldolase activity toward beta-hydroxyamino acids, producing glycine and aldehydes, via a retro-aldol mechanism. This chain is Serine hydroxymethyltransferase, found in Wolbachia sp. subsp. Brugia malayi (strain TRS).